A 365-amino-acid polypeptide reads, in one-letter code: MIKFLSALILLLVTTAAQAERIRDLTSVQGVRQNSLIGYGLVVGLDGTGDQTTQTPFTTQTLNNMLSQLGITVPTGTNMQLKNVAAVMVTASLPPFGRQGQTIDVVVSSMGNAKSLRGGTLLMTPLKGVDSQVYALAQGNILVGGAGASAGGSSVQVNQLNGGRITNGAVIERELPSQFGVGNTLNLQLNDEDFSMAQQIADTINRVRGYGSATALDARTIQVRVPSGNSSQVRFLADIQNMHVNVTPQDAKVVINSRTGSVVMNREVTLDSCAVAQGNLSVTVNRQANVSQPDTPFGGGQTVVTPQTQIDLRQSGGSLQSVRSSASLNNVVRALNALGATPMDLMSILQSMQSAGCLRAKLEII.

Residues 1-19 (MIKFLSALILLLVTTAAQA) form the signal peptide.

Belongs to the FlgI family. As to quaternary structure, the basal body constitutes a major portion of the flagellar organelle and consists of four rings (L,P,S, and M) mounted on a central rod.

It localises to the periplasm. It is found in the bacterial flagellum basal body. Its function is as follows. Assembles around the rod to form the L-ring and probably protects the motor/basal body from shearing forces during rotation. The sequence is that of Flagellar P-ring protein from Escherichia coli O9:H4 (strain HS).